Here is a 95-residue protein sequence, read N- to C-terminus: Aspartyl/glutamyl-tRNA(Asn/Gln) amidotransferase subunit C (95 aa).

The protein belongs to the GatC family. In terms of assembly, heterotrimer of A, B and C subunits.

It catalyses the reaction L-glutamyl-tRNA(Gln) + L-glutamine + ATP + H2O = L-glutaminyl-tRNA(Gln) + L-glutamate + ADP + phosphate + H(+). The catalysed reaction is L-aspartyl-tRNA(Asn) + L-glutamine + ATP + H2O = L-asparaginyl-tRNA(Asn) + L-glutamate + ADP + phosphate + 2 H(+). Its function is as follows. Allows the formation of correctly charged Asn-tRNA(Asn) or Gln-tRNA(Gln) through the transamidation of misacylated Asp-tRNA(Asn) or Glu-tRNA(Gln) in organisms which lack either or both of asparaginyl-tRNA or glutaminyl-tRNA synthetases. The reaction takes place in the presence of glutamine and ATP through an activated phospho-Asp-tRNA(Asn) or phospho-Glu-tRNA(Gln). The sequence is that of Aspartyl/glutamyl-tRNA(Asn/Gln) amidotransferase subunit C from Campylobacter curvus (strain 525.92).